The sequence spans 414 residues: WW domain-containing oxidoreductase (414 aa).

The segment at 1 to 23 (MAALRYAGLDDTDSEDELPPGWE) is disordered. Position 12 is a phosphothreonine (T12). S14 carries the post-translational modification Phosphoserine. The 34-residue stretch at 16–49 (DELPPGWEERTTKDGWVYYANHTEEKTQWEHPKT) folds into the WW 1 domain. A Phosphotyrosine modification is found at Y33. The short motif at 50 to 55 (GKRKRV) is the Nuclear localization signal element. One can recognise a WW 2 domain in the interval 57-90 (GDLPYGWEQETDENGQVFFVDHINKRTTYLDPRL). Residues 125–414 (KVVVVTGANS…IQERLGSQSG (290 aa)) are interaction with MAPT. 131-137 (GANSGIG) lines the NADP(+) pocket. The tract at residues 209–273 (CNAATFALPW…RFTDINDSLG (65 aa)) is mediates targeting to the mitochondria. Substrate is bound at residue S260. A Phosphotyrosine; by TNK2 modification is found at Y287. Y293 (proton acceptor) is an active-site residue.

Belongs to the short-chain dehydrogenases/reductases (SDR) family. In terms of assembly, interacts with TP53, p73/TP73 and MAPK8. Interacts with MAPT/TAU, RUNX2 and HYAL2. Forms a ternary complex with TP53 and MDM2. Interacts with ERBB4, LITAF and WBP1. Interacts with DVL1, DVL2 and DVL3. May interact with FAM189B and SCOTIN. Interacts with TNK2. Interacts with TMEM207. Interacts (via WW domain) with VOPP1. Phosphorylated upon genotoxic stress. Phosphorylation of Tyr-33 regulates interaction with TP53, TP73 and MAPK8. May also regulate proapoptotic activity. Phosphorylation by TNK2 is associated with polyubiquitination and degradation. Post-translationally, ubiquitinated when phosphorylated by TNK2, leading to its degradation. As to expression, widely expressed. Strongly expressed in testis, prostate, and ovary. Overexpressed in cancer cell lines. Isoform 5 and isoform 6 may only be expressed in tumor cell lines.

The protein localises to the cytoplasm. Its subcellular location is the nucleus. The protein resides in the mitochondrion. It is found in the golgi apparatus. It localises to the lysosome. Putative oxidoreductase. Acts as a tumor suppressor and plays a role in apoptosis. Required for normal bone development. May function synergistically with p53/TP53 to control genotoxic stress-induced cell death. Plays a role in TGFB1 signaling and TGFB1-mediated cell death. May also play a role in tumor necrosis factor (TNF)-mediated cell death. Inhibits Wnt signaling, probably by sequestering DVL2 in the cytoplasm. The protein is WW domain-containing oxidoreductase (WWOX) of Homo sapiens (Human).